The following is a 172-amino-acid chain: MPLRASEHAYRPLGPGTPPVRARLPAAAWVGVGTIIGGVVIIAALVLVPSRASWALSPCDSGWHEFNLGCISWDPTPMEHEQAVGGCSAPATLIPRAAAKQLAAVARVQSARSSGYWWVSGDGIRARLRLVDGVGGIDQFCEEPALRICYYPRSPGGFVQFVTSTRNALGLP.

At 1 to 27 (MPLRASEHAYRPLGPGTPPVRARLPAA) the chain is on the intravirion side. A helical; Signal-anchor for type II membrane protein transmembrane segment spans residues 28-48 (AWVGVGTIIGGVVIIAALVLV). The Virion surface portion of the chain corresponds to 49-172 (PSRASWALSP…TSTRNALGLP (124 aa)).

Belongs to the herpesviridae HHV-1 UL45 family.

It is found in the virion membrane. Its function is as follows. Important virulence factor of HSV neurotropism. Seems to be required for glycoprotein B-induced fusion. Dispensable for growth in vitro. The polypeptide is Envelope protein UL45 (Homo sapiens (Human)).